The following is a 251-amino-acid chain: Triosephosphate isomerase (251 aa).

9–11 serves as a coordination point for substrate; the sequence is NWK. His-95 functions as the Electrophile in the catalytic mechanism. The Proton acceptor role is filled by Glu-167. Residues Gly-173, Ser-213, and 234–235 each bind substrate; that span reads GG.

The protein belongs to the triosephosphate isomerase family. In terms of assembly, homodimer.

Its subcellular location is the cytoplasm. It carries out the reaction D-glyceraldehyde 3-phosphate = dihydroxyacetone phosphate. Its pathway is carbohydrate biosynthesis; gluconeogenesis. It participates in carbohydrate degradation; glycolysis; D-glyceraldehyde 3-phosphate from glycerone phosphate: step 1/1. In terms of biological role, involved in the gluconeogenesis. Catalyzes stereospecifically the conversion of dihydroxyacetone phosphate (DHAP) to D-glyceraldehyde-3-phosphate (G3P). The sequence is that of Triosephosphate isomerase from Pelobacter propionicus (strain DSM 2379 / NBRC 103807 / OttBd1).